The chain runs to 737 residues: 1,4-alpha-glucan branching enzyme GlgB (737 aa).

D419 (nucleophile) is an active-site residue. E472 acts as the Proton donor in catalysis.

The protein belongs to the glycosyl hydrolase 13 family. GlgB subfamily. As to quaternary structure, monomer.

It carries out the reaction Transfers a segment of a (1-&gt;4)-alpha-D-glucan chain to a primary hydroxy group in a similar glucan chain.. The protein operates within glycan biosynthesis; glycogen biosynthesis. Catalyzes the formation of the alpha-1,6-glucosidic linkages in glycogen by scission of a 1,4-alpha-linked oligosaccharide from growing alpha-1,4-glucan chains and the subsequent attachment of the oligosaccharide to the alpha-1,6 position. This chain is 1,4-alpha-glucan branching enzyme GlgB, found in Cellvibrio japonicus (strain Ueda107) (Pseudomonas fluorescens subsp. cellulosa).